The sequence spans 256 residues: MRHIPRRRFGQHFLVDHHIIAEIIHIICPLPGDRMIEIGPGLGALTQPLLNNLDTLQAIELDRDIVDYLSRNYAEKLVIHNVDALKFDFSALGEGLRIVGNLPYNISTPLLFHLSRFSNLIIDMHFMLQLEVVERMVAQPSTPDYGRLSLMLQNRFEMEQMLIVPAEAFNPPPRVQSAIVCMRPRVVPVIPFGLEKLFGEMVLAAFSQRRKTLRNTLRHYLTIKDFDQLRIDPGLRAENLSLEQYSAITRHIHKIR.

Residues His12, Leu14, Gly39, Glu60, Asp83, and Asn101 each coordinate S-adenosyl-L-methionine.

It belongs to the class I-like SAM-binding methyltransferase superfamily. rRNA adenine N(6)-methyltransferase family. RsmA subfamily.

It is found in the cytoplasm. It catalyses the reaction adenosine(1518)/adenosine(1519) in 16S rRNA + 4 S-adenosyl-L-methionine = N(6)-dimethyladenosine(1518)/N(6)-dimethyladenosine(1519) in 16S rRNA + 4 S-adenosyl-L-homocysteine + 4 H(+). Functionally, specifically dimethylates two adjacent adenosines (A1518 and A1519) in the loop of a conserved hairpin near the 3'-end of 16S rRNA in the 30S particle. May play a critical role in biogenesis of 30S subunits. This Nitrosomonas eutropha (strain DSM 101675 / C91 / Nm57) protein is Ribosomal RNA small subunit methyltransferase A.